The primary structure comprises 585 residues: Protein FAM151A (585 aa).

Residues 14-34 (WVFAGITCVSVVVIAAIVLAI) form a helical membrane-spanning segment.

It belongs to the menorin family.

The protein resides in the membrane. The protein is Protein FAM151A (FAM151A) of Homo sapiens (Human).